Here is a 364-residue protein sequence, read N- to C-terminus: Chaperone protein DnaJ (364 aa).

One can recognise a J domain in the interval 4–69 (DYYEILGLSK…NKKAKYDRFG (66 aa)). A CR-type zinc finger spans residues 135–213 (GYKNNINITR…CKGKGRITNQ (79 aa)). Cysteine 148, cysteine 151, cysteine 165, cysteine 168, cysteine 187, cysteine 190, cysteine 201, and cysteine 204 together coordinate Zn(2+). 4 CXXCXGXG motif repeats span residues 148–155 (CHSCLGKK), 165–172 (CNMCNGSG), 187–194 (CSKCYGEG), and 201–208 (CKSCKGKG).

This sequence belongs to the DnaJ family. Homodimer. Zn(2+) serves as cofactor.

It is found in the cytoplasm. Participates actively in the response to hyperosmotic and heat shock by preventing the aggregation of stress-denatured proteins and by disaggregating proteins, also in an autonomous, DnaK-independent fashion. Unfolded proteins bind initially to DnaJ; upon interaction with the DnaJ-bound protein, DnaK hydrolyzes its bound ATP, resulting in the formation of a stable complex. GrpE releases ADP from DnaK; ATP binding to DnaK triggers the release of the substrate protein, thus completing the reaction cycle. Several rounds of ATP-dependent interactions between DnaJ, DnaK and GrpE are required for fully efficient folding. Also involved, together with DnaK and GrpE, in the DNA replication of plasmids through activation of initiation proteins. This Borrelia garinii subsp. bavariensis (strain ATCC BAA-2496 / DSM 23469 / PBi) (Borreliella bavariensis) protein is Chaperone protein DnaJ.